The primary structure comprises 218 residues: Ropporin-1-like protein (218 aa).

Residues 17–54 (PELPDILKQFTKAAIRTQPADVLQWSAGYFSALSRGDP) form the RIIa domain.

The protein belongs to the ropporin family. As to quaternary structure, component of the axonemal radial spoke complex 1 (RS1), at least composed of spoke head proteins RSPH1, RSPH3, RSPH9 and the cilia-specific component RSPH4A or sperm-specific component RSPH6A, spoke stalk proteins RSPH14, DNAJB13, DYDC1, ROPN1L and NME5, and the anchor protein IQUB. May interact with AKAP3. Interacts with FSCB; the interaction increases upon spermatozoa capacitation conditions. Interacts with CFAP61. Post-translationally, sumoylated, sumoylation decreases upon spermatozoa capacitation conditions. Testis-specific. Expression is restricted to germ cells.

Its subcellular location is the cell projection. It is found in the cilium. It localises to the flagellum. Functionally, functions as part of axonemal radial spoke complexes that play an important part in the motility of sperm and cilia. Important for male fertility. With ROPN1, involved in fibrous sheath integrity and sperm motility, plays a role in PKA-dependent signaling processes required for spermatozoa capacitation. The protein is Ropporin-1-like protein (Ropn1l) of Mus musculus (Mouse).